A 292-amino-acid chain; its full sequence is UPF0725 protein At4g28920 (292 aa).

Acidic residues predominate over residues Met-1–Glu-17. Residues Met-1–Gln-24 are disordered.

The protein belongs to the UPF0725 (EMB2204) family.

This chain is UPF0725 protein At4g28920, found in Arabidopsis thaliana (Mouse-ear cress).